Here is a 321-residue protein sequence, read N- to C-terminus: MIFATLEHILTHISFSIISIVIIIHLMNLLVYEIEELRNSLEKGMIATFSSITGFLVTRWISSGHFPLSNLYESLIFLSWSLSIIHIILYIRNYKNDLNAITAPSAIFTQGFATSGLSTEMHQPAILVPALQSQWLMMHVSMMLLSYAALLCGSLLSVALIVITFQKKTDFFLKNKNFYSLRKSFFFGNMEYLNEKGSILKKTSLLSFKNFYKYQLIQHLDSWSYRVISLGFTFLTIGILSGAVWANEAWGSYWNWDPKETWAFITWTIFAIYLHTRKNSKLQDQVTNSAFVASIGFLLIWICYFGINLLGIGFHSYGSFQ.

8 helical membrane-spanning segments follow: residues 12 to 32 (HISF…LLVY), 45 to 62 (MIAT…RWIS), 71 to 91 (LYES…ILYI), 98 to 117 (LNAI…TSGL), 143 to 163 (MLLS…LIVI), 227 to 247 (VISL…VWAN), 260 to 277 (ETWA…LHTR), and 292 to 312 (VASI…LLGI).

The protein belongs to the CcmF/CycK/Ccl1/NrfE/CcsA family. May interact with Ccs1.

Its subcellular location is the plastid. The protein resides in the chloroplast thylakoid membrane. Its function is as follows. Required during biogenesis of c-type cytochromes (cytochrome c6 and cytochrome f) at the step of heme attachment. This Phalaenopsis aphrodite subsp. formosana (Moth orchid) protein is Cytochrome c biogenesis protein CcsA.